The sequence spans 104 residues: Transcription initiation factor IIA subunit 2 (104 aa).

It belongs to the TFIIA subunit 2 family. TFIIA is a heterodimer of the large unprocessed subunit 1 and a small subunit gamma.

It localises to the nucleus. TFIIA is a component of the transcription machinery of RNA polymerase II and plays an important role in transcriptional activation. TFIIA in a complex with TBP mediates transcriptional activity. This chain is Transcription initiation factor IIA subunit 2, found in Schistosoma mansoni (Blood fluke).